The sequence spans 170 residues: RNA pyrophosphohydrolase (170 aa).

The 151-residue stretch at 8–158 (PYRTCVGMML…KRPVYERVVK (151 aa)) folds into the Nudix hydrolase domain. The Nudix box signature appears at 46 to 67 (GGVDPGEDTWLAAKRELYEETS).

Belongs to the Nudix hydrolase family. RppH subfamily. A divalent metal cation serves as cofactor.

Accelerates the degradation of transcripts by removing pyrophosphate from the 5'-end of triphosphorylated RNA, leading to a more labile monophosphorylated state that can stimulate subsequent ribonuclease cleavage. The chain is RNA pyrophosphohydrolase from Nitrobacter winogradskyi (strain ATCC 25391 / DSM 10237 / CIP 104748 / NCIMB 11846 / Nb-255).